Consider the following 176-residue polypeptide: Probable fimbrial subunit LpfE (176 aa).

The first 23 residues, 1–23 (MKFKRLLHSGIASLSLVACGVNA), serve as a signal peptide directing secretion.

This sequence belongs to the fimbrial protein family.

Its subcellular location is the fimbrium. Its function is as follows. Part of the lpfABCC'DE fimbrial operon. LP fimbriae may participate in the interaction with eukaryotic cells by assisting in microcolony formation. The sequence is that of Probable fimbrial subunit LpfE (lpfE) from Escherichia coli O157:H7.